The sequence spans 456 residues: Serine/threonine-protein kinase meng-po (456 aa).

The tract at residues 15-78 (RSFGDGGSTN…RSSIYKKPDK (64 aa)) is disordered. Residues 22–55 (STNSRNSNNNSSTCTNHNNQKRCSTPLTPTSTST) show a composition bias toward low complexity. The 267-residue stretch at 101–367 (YNIEKTLAEG…VAKYMKDRWV (267 aa)) folds into the Protein kinase domain. ATP contacts are provided by residues 107 to 115 (LAEGCFAKI) and Lys130. The active-site Proton acceptor is the Asp221. Residue Ser334 is modified to Phosphoserine; by PKA.

It belongs to the protein kinase superfamily. Ser/Thr protein kinase family. The cofactor is Mg(2+). As to expression, expressed in the mushroom bodies (at protein level).

It catalyses the reaction L-seryl-[protein] + ATP = O-phospho-L-seryl-[protein] + ADP + H(+). It carries out the reaction L-threonyl-[protein] + ATP = O-phospho-L-threonyl-[protein] + ADP + H(+). Its activity is regulated as follows. Activated by Pka-C1-mediated phosphorylation of Ser-334. Its function is as follows. Serine/threonine-protein kinase involved in memory formation. Together with the cAMP-dependent protein kinase A Pka-C1, promotes long-term memory (LTM) by regulating CrebB stability and activity. Involved in the maintenance of anesthesia-sensitive memory (ASM) which includes short-term memory (STM) and middle-term memory (MTM). This chain is Serine/threonine-protein kinase meng-po, found in Drosophila melanogaster (Fruit fly).